The chain runs to 303 residues: Imidazoleglycerol-phosphate dehydratase (303 aa).

This sequence belongs to the imidazoleglycerol-phosphate dehydratase family.

The protein localises to the cytoplasm. The catalysed reaction is D-erythro-1-(imidazol-4-yl)glycerol 3-phosphate = 3-(imidazol-4-yl)-2-oxopropyl phosphate + H2O. It functions in the pathway amino-acid biosynthesis; L-histidine biosynthesis; L-histidine from 5-phospho-alpha-D-ribose 1-diphosphate: step 6/9. This chain is Imidazoleglycerol-phosphate dehydratase, found in Neisseria gonorrhoeae (strain ATCC 700825 / FA 1090).